Here is a 128-residue protein sequence, read N- to C-terminus: UPF0325 protein NT01EI_0832 (128 aa).

Belongs to the UPF0325 family.

This chain is UPF0325 protein NT01EI_0832, found in Edwardsiella ictaluri (strain 93-146).